Here is a 1887-residue protein sequence, read N- to C-terminus: ATP-dependent DNA helicase tlh1 (1887 aa).

Over residues 329-347 (NQQRREQQDKGENKKRQDD) the composition is skewed to basic and acidic residues. Disordered regions lie at residues 329-372 (NQQR…EEEE), 504-552 (ERKE…NTDD), and 1110-1135 (MVEG…EMTQ). 2 stretches are compositionally biased toward acidic residues: residues 360 to 372 (LEDD…EEEE) and 524 to 533 (SAEDDNDNDN). Residues 540-549 (NNNNNNNNTN) are compositionally biased toward low complexity. Residues 1112 to 1131 (EGDKEKDKTNEEKNKDEVKA) show a composition bias toward basic and acidic residues. The region spanning 1200 to 1375 (YFSLLNRMNL…RQTFCTNFYV (176 aa)) is the Helicase ATP-binding domain. Residues 1213 to 1220 (LPTGGGKS) and 1240 to 1247 (MNMVTLVL) contribute to the ATP site. A DEAH box motif is present at residues 1322–1325 (DEAH). Residues 1401–1559 (DLRTLMKRTK…CVRSFLASEM (159 aa)) enclose the Helicase C-terminal domain. A disordered region spans residues 1613–1643 (YNASFSSSPPPQPGNSSGMSAMNTNTTSTTP). The span at 1626 to 1642 (GNSSGMSAMNTNTTSTT) shows a compositional bias: low complexity. The CCHC-type zinc finger occupies 1804 to 1821 (STCYKCGKADHNLRECKL).

It belongs to the helicase family. RecQ subfamily.

It catalyses the reaction Couples ATP hydrolysis with the unwinding of duplex DNA by translocating in the 3'-5' direction.. It carries out the reaction ATP + H2O = ADP + phosphate + H(+). Its function is as follows. A probable ATP-dependent 3'-5' DNA helicase. Has a role in telomerase-independent telomere maintenance. In Schizosaccharomyces pombe (strain 972 / ATCC 24843) (Fission yeast), this protein is ATP-dependent DNA helicase tlh1.